The chain runs to 279 residues: Mirror-image polydactyly gene 1 protein homolog (279 aa).

Basic and acidic residues predominate over residues 1–11 (MNSEQSIRELG). Residues 1 to 21 (MNSEQSIRELGNEVPSEDLEL) form a disordered region. 2 coiled-coil regions span residues 65-169 (LNKE…MLEN) and 218-255 (AEEM…STNN). The tract at residues 247–268 (KQNQTSTNNTKHPTAKNNQEHT) is disordered. Residues 248 to 263 (QNQTSTNNTKHPTAKN) show a composition bias toward polar residues.

The protein is Mirror-image polydactyly gene 1 protein homolog (Mipol1) of Mus musculus (Mouse).